Reading from the N-terminus, the 64-residue chain is MYKQIFLCLIIAALCATIMAEASAFADADEDDDKRYVRGMASKAGAIAGKIAKVALKALGRRDS.

The first 20 residues, 1–20 (MYKQIFLCLIIAALCATIMA), serve as a signal peptide directing secretion. Positions 21-35 (EASAFADADEDDDKR) are excised as a propeptide. The residue at position 59 (L59) is a Leucine amide. A propeptide spanning residues 60 to 64 (GRRDS) is cleaved from the precursor.

Belongs to the gastrin/cholecystokinin family. Magainin subfamily. In terms of tissue distribution, expressed by the skin glands. Synthesized in the stomach and stored in a novel granular multinucleated cell in the gastric mucosa. Stored as active, processed peptides in large granules within the granular gland secretions of the skin.

Its subcellular location is the secreted. In terms of biological role, PGLa and PGLa-H display a broad-spectrum of antibacterial activity against a range of Gram-positive and Gram-negative bacteria. PGLa also displays antifungal activity against C.albicans ATCC 14053. PGLa-H shows moderate antibacterial activity against the multidrug-resistant methicillin-resistant S.aureus (MRSA) but exhibits very little hemolytic activity. This Xenopus laevis (African clawed frog) protein is PYLa/PGLa A (pgla-a).